Consider the following 412-residue polypeptide: Peptidase T (412 aa).

Zn(2+) is bound at residue H84. The active site involves D86. D146 is a binding site for Zn(2+). The active-site Proton acceptor is E179. Positions 180, 202, and 385 each coordinate Zn(2+).

This sequence belongs to the peptidase M20B family. It depends on Zn(2+) as a cofactor.

The protein localises to the cytoplasm. It catalyses the reaction Release of the N-terminal residue from a tripeptide.. Cleaves the N-terminal amino acid of tripeptides. This Pasteurella multocida (strain Pm70) protein is Peptidase T.